The chain runs to 464 residues: Soluble pyridine nucleotide transhydrogenase (464 aa).

35-44 (DSRRVVGGNC) provides a ligand contact to FAD.

Belongs to the class-I pyridine nucleotide-disulfide oxidoreductase family. FAD serves as cofactor.

Its subcellular location is the cytoplasm. The catalysed reaction is NAD(+) + NADPH = NADH + NADP(+). In terms of biological role, conversion of NADPH, generated by peripheral catabolic pathways, to NADH, which can enter the respiratory chain for energy generation. In Pseudomonas paraeruginosa (strain DSM 24068 / PA7) (Pseudomonas aeruginosa (strain PA7)), this protein is Soluble pyridine nucleotide transhydrogenase.